The sequence spans 691 residues: MELRSTAAPRAEGYSNVGFQNEENFLENENTSGNNSIRSRAVQSREHTNTKQDEEQVTVEQDSPRNREHMEDDDEEMQQKGCLERRYDTVCGFCRKHKTTLRHIIWGILLAGYLVMVISACVLNFHRALPLFVITVAAIFFVVWDHLMAKYEHRIDEMLSPGRRLLNSHWFWLKWVIWSSLVLAVIFWLAFDTAKLGQQQLVSFGGLIMYIVLLFLFSKYPTRVYWRPVLWGIGLQFLLGLLILRTDPGFIAFDWLGRQVQTFLEYTDAGASFVFGEKYKDHFFAFKVLPIVVFFSTVMSMLYYLGLMQWIIRKVGWIMLVTTGSSPIESVVASGNIFVGQTESPLLVRPYLPYITKSELHAIMTAGFSTIAGSVLGAYISFGVPSSHLLTASVMSAPASLAAAKLFWPETEKPKITLKNAMKMESGDSGNLLEAATQGASSSISLVANIAVNLIAFLALLSFMNSALSWFGNMFDYPQLSFELICSYIFMPFSFMMGVEWQDSFMVARLIGYKTFFNEFVAYEHLSKWIHLRKEGGPKFVNGVQQYISIRSEIIATYALCGFANIGSLGIVIGGLTSMAPSRKRDIASGAVRALIAGTVACFMTACIAGILSSTPVDINCHHVLENAFNSTFPGNTTKVIACCQSLLSSTVAKGPGEVIPGGNHSLYSLKGCCTLLNPSTFNCNGISNTF.

A disordered region spans residues 1 to 78; the sequence is MELRSTAAPR…HMEDDDEEMQ (78 aa). Topologically, residues 1–102 are cytoplasmic; that stretch reads MELRSTAAPR…FCRKHKTTLR (102 aa). Over residues 21–30 the composition is skewed to low complexity; that stretch reads NEENFLENEN. The segment covering 31–42 has biased composition (polar residues); it reads TSGNNSIRSRAV. Positions 43–54 are enriched in basic and acidic residues; it reads QSREHTNTKQDE. A helical transmembrane segment spans residues 103–123; that stretch reads HIIWGILLAGYLVMVISACVL. The Extracellular portion of the chain corresponds to 124-128; sequence NFHRA. The chain crosses the membrane as a helical span at residues 129–149; it reads LPLFVITVAAIFFVVWDHLMA. The Cytoplasmic segment spans residues 150–173; sequence KYEHRIDEMLSPGRRLLNSHWFWL. The helical transmembrane segment at 174–194 threads the bilayer; the sequence is KWVIWSSLVLAVIFWLAFDTA. The Extracellular portion of the chain corresponds to 195–197; the sequence is KLG. Residues 198–219 traverse the membrane as a helical segment; the sequence is QQQLVSFGGLIMYIVLLFLFSK. The Cytoplasmic portion of the chain corresponds to 220–227; it reads YPTRVYWR. The chain crosses the membrane as a helical span at residues 228–247; the sequence is PVLWGIGLQFLLGLLILRTD. At 248-284 the chain is on the extracellular side; that stretch reads PGFIAFDWLGRQVQTFLEYTDAGASFVFGEKYKDHFF. The chain crosses the membrane as a helical span at residues 285–305; sequence AFKVLPIVVFFSTVMSMLYYL. At 306–329 the chain is on the cytoplasmic side; the sequence is GLMQWIIRKVGWIMLVTTGSSPIE. The helical intramembrane region spans 330-348; it reads SVVASGNIFVGQTESPLLV. At 349–361 the chain is on the cytoplasmic side; the sequence is RPYLPYITKSELH. Residues 362–384 traverse the membrane as a helical segment; the sequence is AIMTAGFSTIAGSVLGAYISFGV. The Extracellular segment spans residues 385–386; the sequence is PS. A helical membrane pass occupies residues 387–408; it reads SHLLTASVMSAPASLAAAKLFW. Residues 409-443 are Cytoplasmic-facing; the sequence is PETEKPKITLKNAMKMESGDSGNLLEAATQGASSS. Residues 444–469 traverse the membrane as a helical segment; the sequence is ISLVANIAVNLIAFLALLSFMNSALS. Topologically, residues 470–507 are extracellular; that stretch reads WFGNMFDYPQLSFELICSYIFMPFSFMMGVEWQDSFMV. Residues 508 to 527 constitute an intramembrane region (helical); sequence ARLIGYKTFFNEFVAYEHLS. The Extracellular segment spans residues 528–566; sequence KWIHLRKEGGPKFVNGVQQYISIRSEIIATYALCGFANI. Residues 567-577 form a helical membrane-spanning segment; the sequence is GSLGIVIGGLT. Residues 578 to 590 are Cytoplasmic-facing; that stretch reads SMAPSRKRDIASG. The helical transmembrane segment at 591–613 threads the bilayer; the sequence is AVRALIAGTVACFMTACIAGILS. The Extracellular portion of the chain corresponds to 614 to 691; the sequence is STPVDINCHH…FNCNGISNTF (78 aa).

Belongs to the concentrative nucleoside transporter (CNT) (TC 2.A.41) family. As to quaternary structure, homotrimer. Expressed in pancreas, bone marrow, trachea, mammary gland, liver, prostate, and regions of intestine, brain, lung, placenta, testis, kidney, and heart.

Its subcellular location is the cell membrane. The protein resides in the endoplasmic reticulum membrane. The enzyme catalyses thymidine(out) + 2 Na(+)(out) = thymidine(in) + 2 Na(+)(in). It carries out the reaction cytidine(out) + 2 Na(+)(out) = cytidine(in) + 2 Na(+)(in). The catalysed reaction is uridine(out) + 2 Na(+)(out) = uridine(in) + 2 Na(+)(in). It catalyses the reaction adenosine(out) + 2 Na(+)(out) = adenosine(in) + 2 Na(+)(in). The enzyme catalyses guanosine(out) + 2 Na(+)(out) = guanosine(in) + 2 Na(+)(in). It carries out the reaction inosine(out) + 2 Na(+)(out) = inosine(in) + 2 Na(+)(in). In terms of biological role, sodium-dependent, pyrimidine- and purine-selective. Involved in the homeostasis of endogenous nucleosides. Exhibits the transport characteristics of the nucleoside transport system cib or N3 subtype (N3/cib) (with marked transport of both thymidine and inosine). Employs a 2:1 sodium/nucleoside ratio. Transports uridine. Also able to transport gemcitabine, 3'-azido-3'-deoxythymidine (AZT), ribavirin and 3-deazauridine. The chain is Solute carrier family 28 member 3 (SLC28A3) from Homo sapiens (Human).